A 340-amino-acid polypeptide reads, in one-letter code: uncharacterized protein (340 aa).

Residues Lys-193 to Thr-207 are compositionally biased toward basic and acidic residues. Positions Lys-193–Ile-340 are disordered. The span at Phe-217–Ser-228 shows a compositional bias: low complexity. Residues Glu-235 to Ile-244 are compositionally biased toward basic and acidic residues. Composition is skewed to polar residues over residues Ser-263–Gln-279 and Pro-307–Leu-328.

This is an uncharacterized protein from Saccharomyces cerevisiae (strain ATCC 204508 / S288c) (Baker's yeast).